The chain runs to 467 residues: Membrane-bound lytic murein transglycosylase F (467 aa).

An N-terminal signal peptide occupies residues 1-33 (MTELFRHSKHLLASLALLSVLGLMLAMHPSPSA). Positions 34–266 (IERIMARGEL…KLEDRFYGHV (233 aa)) are non-LT domain. The tract at residues 268 to 467 (QFNLYAARSF…RRDDTLIALN (200 aa)) is LT domain. Glutamate 313 is an active-site residue.

This sequence in the N-terminal section; belongs to the bacterial solute-binding protein 3 family. The protein in the C-terminal section; belongs to the transglycosylase Slt family.

It is found in the cell outer membrane. The enzyme catalyses Exolytic cleavage of the (1-&gt;4)-beta-glycosidic linkage between N-acetylmuramic acid (MurNAc) and N-acetylglucosamine (GlcNAc) residues in peptidoglycan, from either the reducing or the non-reducing ends of the peptidoglycan chains, with concomitant formation of a 1,6-anhydrobond in the MurNAc residue.. Functionally, murein-degrading enzyme that degrades murein glycan strands and insoluble, high-molecular weight murein sacculi, with the concomitant formation of a 1,6-anhydromuramoyl product. Lytic transglycosylases (LTs) play an integral role in the metabolism of the peptidoglycan (PG) sacculus. Their lytic action creates space within the PG sacculus to allow for its expansion as well as for the insertion of various structures such as secretion systems and flagella. In Alcanivorax borkumensis (strain ATCC 700651 / DSM 11573 / NCIMB 13689 / SK2), this protein is Membrane-bound lytic murein transglycosylase F.